A 223-amino-acid polypeptide reads, in one-letter code: Ras-related protein Rab-37 (223 aa).

A disordered region spans residues 1-23; sequence MTGTPGAVATRDGEAPERSPPCS. Thr2 is modified (N-acetylthreonine). 8 residues coordinate GTP: Thr38, Gly39, Val40, Gly41, Lys42, Thr43, Cys44, and Thr62. Thr43 lines the Mg(2+) pocket. Short sequence motifs (switch) lie at residues 52–67 and 85–102; these read GAFLSGTFIATVGIDF and DTAGQERFRSVTHAYYRD. Mg(2+)-binding residues include Thr62 and Asp85. GTP-binding residues include Gly88, Asn143, Lys144, Asp146, Met147, Ser173, Ala174, and Lys175. 2 S-geranylgeranyl cysteine lipidation sites follow: Cys219 and Cys220. Cys220 carries the cysteine methyl ester modification. Residues 221–223 constitute a propeptide, removed in mature form; the sequence is SFM.

This sequence belongs to the small GTPase superfamily. Rab family. As to quaternary structure, interacts with RIMS1. Interacts (in GDP-bound form) with RPGR, RPGR functions as guanine exchange factor (GEF). The cofactor is Mg(2+).

The protein resides in the cytoplasmic vesicle. It is found in the cell projection. The protein localises to the cilium. It catalyses the reaction GTP + H2O = GDP + phosphate + H(+). Its activity is regulated as follows. Regulated by guanine nucleotide exchange factors (GEFs) including RPGR which promote the exchange of bound GDP for free GTP. Regulated by GTPase activating proteins (GAPs) which increase the GTP hydrolysis activity. Inhibited by GDP dissociation inhibitors (GDIs). The small GTPases Rab are key regulators of intracellular membrane trafficking, from the formation of transport vesicles to their fusion with membranes. Rabs cycle between an inactive GDP-bound form and an active GTP-bound form that is able to recruit to membranes different sets of downstream effectors directly responsible for vesicle formation, movement, tethering and fusion. Acts as an organizer for autophagosome biogenesis in a GTP-dependent manner. Involved in retinal homeostasis by autophagy regulation. In Homo sapiens (Human), this protein is Ras-related protein Rab-37.